The chain runs to 71 residues: uncharacterized protein (71 aa).

Residues 1–19 (MFLFPSLLSSFCITLRSIS) form the signal peptide.

This is an uncharacterized protein from Pasteurella multocida (strain Pm70).